We begin with the raw amino-acid sequence, 258 residues long: ATP synthase subunit a (258 aa).

The next 6 membrane-spanning stretches (helical) occupy residues 30–50, 85–105, 122–142, 151–171, 198–218, and 230–250; these read SSYFMVLTTVLTIVLFMVAMS, FFPFVFTLFIFILVANMLGMF, LIVTVALAMLVWLTVIIYGVF, LFVPSGVPIFVLPLVVVIEII, FAGFVVTLAAAWGGFGYLAGI, and LEFLVAFLQAYVFAMLTCIYL.

This sequence belongs to the ATPase A chain family. F-type ATPases have 2 components, CF(1) - the catalytic core - and CF(0) - the membrane proton channel. CF(1) has five subunits: alpha(3), beta(3), gamma(1), delta(1), epsilon(1). CF(0) has three main subunits: a(1), b(2) and c(9-12). The alpha and beta chains form an alternating ring which encloses part of the gamma chain. CF(1) is attached to CF(0) by a central stalk formed by the gamma and epsilon chains, while a peripheral stalk is formed by the delta and b chains.

Its subcellular location is the cell inner membrane. Key component of the proton channel; it plays a direct role in the translocation of protons across the membrane. This is ATP synthase subunit a from Maricaulis maris (strain MCS10) (Caulobacter maris).